A 292-amino-acid polypeptide reads, in one-letter code: Nucleotide-binding protein azo0399 (292 aa).

Residue 8–15 (GLSGSGKS) coordinates ATP. 57–60 (DMRS) contacts GTP.

It belongs to the RapZ-like family.

Functionally, displays ATPase and GTPase activities. In Azoarcus sp. (strain BH72), this protein is Nucleotide-binding protein azo0399.